We begin with the raw amino-acid sequence, 608 residues long: Nuclear protein localization protein 4 homolog (608 aa).

A2 carries the N-acetylalanine modification. K179 is modified (N6-acetyllysine). Residues I226–F363 form the MPN domain. The segment at T580–T608 adopts a RanBP2-type zinc-finger fold.

This sequence belongs to the NPL4 family. In terms of assembly, heterodimer with UFD1. The heterodimer binds ubiquitinated proteins. The heterodimer binds to VCP and inhibits Golgi membrane fusion. Interacts with ZFAND2B; probably through VCP.

It localises to the cytoplasm. The protein localises to the cytosol. It is found in the endoplasmic reticulum. Its subcellular location is the nucleus. It functions in the pathway protein degradation; proteasomal ubiquitin-dependent pathway. Its function is as follows. The ternary complex containing UFD1, VCP and NPLOC4 binds ubiquitinated proteins and is necessary for the export of misfolded proteins from the ER to the cytoplasm, where they are degraded by the proteasome. The NPLOC4-UFD1-VCP complex regulates spindle disassembly at the end of mitosis and is necessary for the formation of a closed nuclear envelope. Acts as a negative regulator of type I interferon production via the complex formed with VCP and UFD1, which binds to RIGI and recruits RNF125 to promote ubiquitination and degradation of RIGI. This is Nuclear protein localization protein 4 homolog (Nploc4) from Rattus norvegicus (Rat).